The primary structure comprises 223 residues: UPF0758 protein HD_0732 (223 aa).

The region spanning 98 to 220 (TINTPHLAIM…YFSFEEERFH (123 aa)) is the MPN domain. The Zn(2+) site is built by His-169, His-171, and Asp-182. Positions 169 to 182 (HNHPSGNCTASQAD) match the JAMM motif motif.

The protein belongs to the UPF0758 family.

This Haemophilus ducreyi (strain 35000HP / ATCC 700724) protein is UPF0758 protein HD_0732.